Reading from the N-terminus, the 453-residue chain is Ribosomal protein uS12 methylthiotransferase RimO (453 aa).

An MTTase N-terminal domain is found at 5 to 120 (PKVGFVSLGC…VMQAVHSHLP (116 aa)). [4Fe-4S] cluster contacts are provided by Cys-14, Cys-50, Cys-79, Cys-151, Cys-155, and Cys-158. Residues 137 to 383 (LTPRHYAYLK…EVAEEVSAHR (247 aa)) enclose the Radical SAM core domain. One can recognise a TRAM domain in the interval 385 to 453 (QRKVGKTLKV…ADGHDLWGEV (69 aa)).

Belongs to the methylthiotransferase family. RimO subfamily. [4Fe-4S] cluster serves as cofactor.

The protein resides in the cytoplasm. It catalyses the reaction L-aspartate(89)-[ribosomal protein uS12]-hydrogen + (sulfur carrier)-SH + AH2 + 2 S-adenosyl-L-methionine = 3-methylsulfanyl-L-aspartate(89)-[ribosomal protein uS12]-hydrogen + (sulfur carrier)-H + 5'-deoxyadenosine + L-methionine + A + S-adenosyl-L-homocysteine + 2 H(+). Catalyzes the methylthiolation of an aspartic acid residue of ribosomal protein uS12. The polypeptide is Ribosomal protein uS12 methylthiotransferase RimO (Burkholderia cenocepacia (strain ATCC BAA-245 / DSM 16553 / LMG 16656 / NCTC 13227 / J2315 / CF5610) (Burkholderia cepacia (strain J2315))).